The sequence spans 465 residues: Ribulose bisphosphate carboxylase large chain (465 aa).

The residue at position 4 (Lys4) is an N6,N6,N6-trimethyllysine. Positions 113 and 163 each coordinate substrate. Lys165 serves as the catalytic Proton acceptor. Residue Lys167 participates in substrate binding. Mg(2+) is bound by residues Lys191, Asp193, and Glu194. Lys191 carries the N6-carboxylysine modification. His284 (proton acceptor) is an active-site residue. 3 residues coordinate substrate: Arg285, His317, and Ser369.

It belongs to the RuBisCO large chain family. Type I subfamily. In terms of assembly, heterohexadecamer of 8 large chains and 8 small chains; disulfide-linked. The disulfide link is formed within the large subunit homodimers. Requires Mg(2+) as cofactor. Post-translationally, the disulfide bond which can form in the large chain dimeric partners within the hexadecamer appears to be associated with oxidative stress and protein turnover.

It is found in the plastid. The protein localises to the chloroplast. The enzyme catalyses 2 (2R)-3-phosphoglycerate + 2 H(+) = D-ribulose 1,5-bisphosphate + CO2 + H2O. It carries out the reaction D-ribulose 1,5-bisphosphate + O2 = 2-phosphoglycolate + (2R)-3-phosphoglycerate + 2 H(+). In terms of biological role, ruBisCO catalyzes two reactions: the carboxylation of D-ribulose 1,5-bisphosphate, the primary event in carbon dioxide fixation, as well as the oxidative fragmentation of the pentose substrate in the photorespiration process. Both reactions occur simultaneously and in competition at the same active site. This Cassia fistula (Golden shower tree) protein is Ribulose bisphosphate carboxylase large chain.